The sequence spans 476 residues: Aspartyl/glutamyl-tRNA(Asn/Gln) amidotransferase subunit B (476 aa).

This sequence belongs to the GatB/GatE family. GatB subfamily. In terms of assembly, heterotrimer of A, B and C subunits.

It carries out the reaction L-glutamyl-tRNA(Gln) + L-glutamine + ATP + H2O = L-glutaminyl-tRNA(Gln) + L-glutamate + ADP + phosphate + H(+). The enzyme catalyses L-aspartyl-tRNA(Asn) + L-glutamine + ATP + H2O = L-asparaginyl-tRNA(Asn) + L-glutamate + ADP + phosphate + 2 H(+). Allows the formation of correctly charged Asn-tRNA(Asn) or Gln-tRNA(Gln) through the transamidation of misacylated Asp-tRNA(Asn) or Glu-tRNA(Gln) in organisms which lack either or both of asparaginyl-tRNA or glutaminyl-tRNA synthetases. The reaction takes place in the presence of glutamine and ATP through an activated phospho-Asp-tRNA(Asn) or phospho-Glu-tRNA(Gln). In Neisseria meningitidis serogroup A / serotype 4A (strain DSM 15465 / Z2491), this protein is Aspartyl/glutamyl-tRNA(Asn/Gln) amidotransferase subunit B.